We begin with the raw amino-acid sequence, 582 residues long: MHYKKSIIGIAVTATAIIAGCQVTHQIVKSQGTAQGKHGEVQVETTFKDGHIVAIDVLKQKENKVLAGAVFKDVKQAIIDNNSIEVDGIAGATVTSKALKEAVGKSIEAAGVTLVATASAKKSEALTPAEYTYDVVIIGSGGAGFSAGLEAIAAGRSAVIIEKMPIIGGNSLISGAEMNVAGSWVQKNMGITDSKELFISDTLKGGDFKGDPEMVKTMVDNAVGAAEWLRDYVKVEFYPDQLFQFGGHSVKRALIPKGHTGAEVISKFSIKADEVGLPIHTNTKAEKLIQDQTGRIVGVEAAHNGKTITYHAKRGVVIATGGFSSNMEMRKKYNPELDERYGSTGHAGGTGDGIVMAEKIHAAAKNMGYIQSYPICSPTSGAIALIADSRFFGAVLINQKGERFVEELERRDVISHAILAQPGRYTYVLWNQDIENVAHTVEMHQGELKEFTKDGLMYKVDTLEEAAKVFNIPEDKLLSTIKDVNHYAATGKDEAFNHRSGLVDLSKGPYWILKATPSVHHTMGGLVVDTRTRVLDEQGKVIPGLFAAGEVTGLTHGTNRLGGNAYTDIIVYGRIAGQEAAK.

The N-terminal stretch at 1–20 (MHYKKSIIGIAVTATAIIAG) is a signal peptide. The N-palmitoyl cysteine moiety is linked to residue Cys-21. Cys-21 is lipidated: S-diacylglycerol cysteine. Thr-93 is modified (FMN phosphoryl threonine). Residues Ala-143, Glu-162, Asn-170, Ser-171, Gly-175, Ala-176, Ala-285, and Asp-352 each coordinate FAD. Residue Arg-411 is the Proton donor of the active site. FAD contacts are provided by His-521, Glu-550, and Ala-565.

The protein belongs to the FAD-dependent oxidoreductase 2 family. FRD/SDH subfamily. Requires FAD as cofactor. FMN serves as cofactor.

It localises to the cell membrane. The enzyme catalyses dihydrourocanate + A = urocanate + AH2. In terms of biological role, catalyzes the two-electron reduction of urocanate to dihydrourocanate (also named imidazole propionate or deamino-histidine). The physiological electron donor is unknown; it might be the membrane-bound tetraheme cytochrome c (CymA). Enables anaerobic growth with urocanate as a sole terminal electron acceptor, and thus can provide the cells with a niche where no other bacteria can compete and survive. Is unable to reduce cinnamate and other unsaturated organic acids such as acrylic, crotonic, fumaric and orotic acids. Has no fumarate reductase or succinate dehydrogenase activity. This Shewanella oneidensis (strain ATCC 700550 / JCM 31522 / CIP 106686 / LMG 19005 / NCIMB 14063 / MR-1) protein is Urocanate reductase (urdA).